A 150-amino-acid polypeptide reads, in one-letter code: Large ribosomal subunit protein bL9 (150 aa).

The protein belongs to the bacterial ribosomal protein bL9 family.

Binds to the 23S rRNA. The chain is Large ribosomal subunit protein bL9 from Acidovorax ebreus (strain TPSY) (Diaphorobacter sp. (strain TPSY)).